The following is a 261-amino-acid chain: Cytochrome c oxidase subunit 3 (261 aa).

Topologically, residues 1–15 (MTHQTHAYHMVNPSP) are mitochondrial matrix. Residues 16-34 (WPLTGALSALLMTSGLAMW) form a helical membrane-spanning segment. Topologically, residues 35–40 (FHFNSV) are mitochondrial intermembrane. A helical membrane pass occupies residues 41-66 (TLLTLGLTTNMLTMYQWWRDIIREST). Residues 67 to 72 (FQGHHT) are Mitochondrial matrix-facing. A helical transmembrane segment spans residues 73–105 (PTVQKGLRYGMILFIISEVLFFTGFFWAFYHSS). The Mitochondrial intermembrane portion of the chain corresponds to 106–128 (LAPTPELGGCWPPTGISPLNPLE). A helical transmembrane segment spans residues 129-152 (VPLLNTSVLLASGVSITWAHHSLM). The Mitochondrial matrix segment spans residues 153-155 (EGN). A helical transmembrane segment spans residues 156–183 (RNHMLQALFITIALGVYFTLLQASEYYE). Residues 184 to 190 (APFTISD) lie on the Mitochondrial intermembrane side of the membrane. Residues 191–223 (GIYGSTFFVATGFHGLHVIIGSTFLIVCFFRQL) form a helical membrane-spanning segment. Over 224–232 (KFHFTSNHH) the chain is Mitochondrial matrix. The chain crosses the membrane as a helical span at residues 233–256 (FGFEAAAWYWHFVDVVWLFLYVSI). Residues 257 to 261 (YWWGS) are Mitochondrial intermembrane-facing.

Belongs to the cytochrome c oxidase subunit 3 family. Component of the cytochrome c oxidase (complex IV, CIV), a multisubunit enzyme composed of 14 subunits. The complex is composed of a catalytic core of 3 subunits MT-CO1, MT-CO2 and MT-CO3, encoded in the mitochondrial DNA, and 11 supernumerary subunits COX4I, COX5A, COX5B, COX6A, COX6B, COX6C, COX7A, COX7B, COX7C, COX8 and NDUFA4, which are encoded in the nuclear genome. The complex exists as a monomer or a dimer and forms supercomplexes (SCs) in the inner mitochondrial membrane with NADH-ubiquinone oxidoreductase (complex I, CI) and ubiquinol-cytochrome c oxidoreductase (cytochrome b-c1 complex, complex III, CIII), resulting in different assemblies (supercomplex SCI(1)III(2)IV(1) and megacomplex MCI(2)III(2)IV(2)).

The protein localises to the mitochondrion inner membrane. It carries out the reaction 4 Fe(II)-[cytochrome c] + O2 + 8 H(+)(in) = 4 Fe(III)-[cytochrome c] + 2 H2O + 4 H(+)(out). Functionally, component of the cytochrome c oxidase, the last enzyme in the mitochondrial electron transport chain which drives oxidative phosphorylation. The respiratory chain contains 3 multisubunit complexes succinate dehydrogenase (complex II, CII), ubiquinol-cytochrome c oxidoreductase (cytochrome b-c1 complex, complex III, CIII) and cytochrome c oxidase (complex IV, CIV), that cooperate to transfer electrons derived from NADH and succinate to molecular oxygen, creating an electrochemical gradient over the inner membrane that drives transmembrane transport and the ATP synthase. Cytochrome c oxidase is the component of the respiratory chain that catalyzes the reduction of oxygen to water. Electrons originating from reduced cytochrome c in the intermembrane space (IMS) are transferred via the dinuclear copper A center (CU(A)) of subunit 2 and heme A of subunit 1 to the active site in subunit 1, a binuclear center (BNC) formed by heme A3 and copper B (CU(B)). The BNC reduces molecular oxygen to 2 water molecules using 4 electrons from cytochrome c in the IMS and 4 protons from the mitochondrial matrix. The protein is Cytochrome c oxidase subunit 3 (MT-CO3) of Neotragus moschatus (Suni).